Reading from the N-terminus, the 223-residue chain is Thiamine-phosphate synthase (223 aa).

4-amino-2-methyl-5-(diphosphooxymethyl)pyrimidine contacts are provided by residues 37–41 (QFREK) and D72. Residues D73 and D92 each coordinate Mg(2+). A 4-amino-2-methyl-5-(diphosphooxymethyl)pyrimidine-binding site is contributed by S110. Position 136-138 (136-138 (TQS)) interacts with 2-[(2R,5Z)-2-carboxy-4-methylthiazol-5(2H)-ylidene]ethyl phosphate. A 4-amino-2-methyl-5-(diphosphooxymethyl)pyrimidine-binding site is contributed by K139. 2-[(2R,5Z)-2-carboxy-4-methylthiazol-5(2H)-ylidene]ethyl phosphate is bound by residues G168 and 188–189 (IS).

The protein belongs to the thiamine-phosphate synthase family. The cofactor is Mg(2+).

The enzyme catalyses 2-[(2R,5Z)-2-carboxy-4-methylthiazol-5(2H)-ylidene]ethyl phosphate + 4-amino-2-methyl-5-(diphosphooxymethyl)pyrimidine + 2 H(+) = thiamine phosphate + CO2 + diphosphate. It catalyses the reaction 2-(2-carboxy-4-methylthiazol-5-yl)ethyl phosphate + 4-amino-2-methyl-5-(diphosphooxymethyl)pyrimidine + 2 H(+) = thiamine phosphate + CO2 + diphosphate. The catalysed reaction is 4-methyl-5-(2-phosphooxyethyl)-thiazole + 4-amino-2-methyl-5-(diphosphooxymethyl)pyrimidine + H(+) = thiamine phosphate + diphosphate. It functions in the pathway cofactor biosynthesis; thiamine diphosphate biosynthesis; thiamine phosphate from 4-amino-2-methyl-5-diphosphomethylpyrimidine and 4-methyl-5-(2-phosphoethyl)-thiazole: step 1/1. Functionally, condenses 4-methyl-5-(beta-hydroxyethyl)thiazole monophosphate (THZ-P) and 2-methyl-4-amino-5-hydroxymethyl pyrimidine pyrophosphate (HMP-PP) to form thiamine monophosphate (TMP). The chain is Thiamine-phosphate synthase from Streptococcus agalactiae serotype Ia (strain ATCC 27591 / A909 / CDC SS700).